A 204-amino-acid chain; its full sequence is Large ribosomal subunit protein uL4 (204 aa).

The segment at 53–77 is disordered; sequence ISDVSGTTAKPYSQKRTGRARQGSL. Polar residues predominate over residues 56–67; sequence VSGTTAKPYSQK.

Belongs to the universal ribosomal protein uL4 family. Part of the 50S ribosomal subunit.

Functionally, one of the primary rRNA binding proteins, this protein initially binds near the 5'-end of the 23S rRNA. It is important during the early stages of 50S assembly. It makes multiple contacts with different domains of the 23S rRNA in the assembled 50S subunit and ribosome. Forms part of the polypeptide exit tunnel. The chain is Large ribosomal subunit protein uL4 from Wolbachia sp. subsp. Brugia malayi (strain TRS).